The sequence spans 170 residues: Probable calcium-binding protein CML29 (170 aa).

EF-hand domains follow at residues 27 to 62, 63 to 98, and 138 to 170; these read SYISSLVEAFQAFDSDNDGLVTAPELRGLLASLGLD, KPEHEVRDMLARADADRDGKLSVEELLDVMNAGQLG, and ASVEDCMEIIACMDGDGDGAISVEEFRLMAQLL. Ca(2+) is bound by residues Asp-40, Asp-42, Asp-44, Glu-51, Asp-76, Asp-78, Asp-80, Lys-82, Glu-87, Asp-151, Asp-153, Asp-155, and Glu-162.

Potential calcium sensor. This Oryza sativa subsp. japonica (Rice) protein is Probable calcium-binding protein CML29 (CML29).